The following is a 194-amino-acid chain: Large ribosomal subunit protein bL9 (194 aa).

The tract at residues 165–194 is disordered; it reads PEDAEEAVANEEEAEAALLDDEDADEYEQG. Acidic residues predominate over residues 166 to 194; it reads EDAEEAVANEEEAEAALLDDEDADEYEQG.

This sequence belongs to the bacterial ribosomal protein bL9 family.

Its function is as follows. Binds to the 23S rRNA. This chain is Large ribosomal subunit protein bL9, found in Rhodospirillum rubrum (strain ATCC 11170 / ATH 1.1.1 / DSM 467 / LMG 4362 / NCIMB 8255 / S1).